A 298-amino-acid polypeptide reads, in one-letter code: 4-hydroxy-3-methylbut-2-enyl diphosphate reductase (298 aa).

Position 12 (Cys-12) interacts with [4Fe-4S] cluster. Residues His-40 and His-78 each coordinate (2E)-4-hydroxy-3-methylbut-2-enyl diphosphate. His-40 and His-78 together coordinate dimethylallyl diphosphate. Residues His-40 and His-78 each contribute to the isopentenyl diphosphate site. Position 100 (Cys-100) interacts with [4Fe-4S] cluster. His-128 serves as a coordination point for (2E)-4-hydroxy-3-methylbut-2-enyl diphosphate. His-128 is a dimethylallyl diphosphate binding site. Isopentenyl diphosphate is bound at residue His-128. Glu-130 (proton donor) is an active-site residue. Residue Thr-171 participates in (2E)-4-hydroxy-3-methylbut-2-enyl diphosphate binding. Position 200 (Cys-200) interacts with [4Fe-4S] cluster. Residues Ser-228, Ser-229, Asn-230, and Ser-270 each coordinate (2E)-4-hydroxy-3-methylbut-2-enyl diphosphate. Residues Ser-228, Ser-229, Asn-230, and Ser-270 each coordinate dimethylallyl diphosphate. Residues Ser-228, Ser-229, Asn-230, and Ser-270 each coordinate isopentenyl diphosphate.

The protein belongs to the IspH family. It depends on [4Fe-4S] cluster as a cofactor.

It catalyses the reaction isopentenyl diphosphate + 2 oxidized [2Fe-2S]-[ferredoxin] + H2O = (2E)-4-hydroxy-3-methylbut-2-enyl diphosphate + 2 reduced [2Fe-2S]-[ferredoxin] + 2 H(+). The enzyme catalyses dimethylallyl diphosphate + 2 oxidized [2Fe-2S]-[ferredoxin] + H2O = (2E)-4-hydroxy-3-methylbut-2-enyl diphosphate + 2 reduced [2Fe-2S]-[ferredoxin] + 2 H(+). Its pathway is isoprenoid biosynthesis; dimethylallyl diphosphate biosynthesis; dimethylallyl diphosphate from (2E)-4-hydroxy-3-methylbutenyl diphosphate: step 1/1. It functions in the pathway isoprenoid biosynthesis; isopentenyl diphosphate biosynthesis via DXP pathway; isopentenyl diphosphate from 1-deoxy-D-xylulose 5-phosphate: step 6/6. In terms of biological role, catalyzes the conversion of 1-hydroxy-2-methyl-2-(E)-butenyl 4-diphosphate (HMBPP) into a mixture of isopentenyl diphosphate (IPP) and dimethylallyl diphosphate (DMAPP). Acts in the terminal step of the DOXP/MEP pathway for isoprenoid precursor biosynthesis. In Kosmotoga olearia (strain ATCC BAA-1733 / DSM 21960 / TBF 19.5.1), this protein is 4-hydroxy-3-methylbut-2-enyl diphosphate reductase.